A 278-amino-acid chain; its full sequence is Splicing factor YJU2 (278 aa).

Zn(2+) is bound by residues Cys-51, Cys-54, Cys-88, and Cys-91. Positions 228 to 278 are disordered; the sequence is HRQRTNKPGNNNDEKRTPLFNPTSTKGKIQKKSSVRTNPLGIVIKRGKSLK. 2 consecutive short sequence motifs (nuclear localization signal) follow at residues 242–258 and 260–278; these read KRTP…KIQK and SSVR…KSLK.

It belongs to the CWC16 family. YJU2 subfamily. As to quaternary structure, component of the spliceosome. Present in the activated B complex, the catalytically activated B* complex which catalyzes the branching, the catalytic step 1 C complex catalyzing the exon ligation, and the postcatalytic P complex containing the ligated exons (mRNA) and the excised lariat intron. Interacts (via C-terminus) with CLF1. Interacts (via N-terminus) with SYF1. Interacts with U2 snRNA; this interaction is direct. Identified in the CWC complex (or CEF1-associated complex), a spliceosome sub-complex reminiscent of a late-stage spliceosome composed of the U2, U5 and U6 snRNAs and at least BUD13, BUD31, BRR2, CDC40, CEF1, CLF1, CUS1, CWC2, CWC15, CWC21, CWC22, CWC23, CWC24, CWC25, CWC27, ECM2, HSH155, IST3, ISY1, LEA1, MSL1, NTC20, PRP8, PRP9, PRP11, PRP19, PRP21, PRP22, PRP45, PRP46, SLU7, SMB1, SMD1, SMD2, SMD3, SMX2, SMX3, SNT309, SNU114, SPP2, SYF1, SYF2, RSE1 and YJU2.

It is found in the nucleus. Functionally, part of the spliceosome which catalyzes two sequential transesterification reactions, first the excision of the non-coding intron from pre-mRNA and then the ligation of the coding exons to form the mature mRNA. Plays a role (via N-terminus) in stabilizing the structure of the spliceosome catalytic core and docking of the branch helix into the active site, producing 5'-exon and lariat intron-3'-intermediates. Further stabilizes spliceosome conformation for 3'-splice site docking (via C-terminus) promoting exon ligation. The sequence is that of Splicing factor YJU2 from Saccharomyces cerevisiae (strain ATCC 204508 / S288c) (Baker's yeast).